The sequence spans 595 residues: NADPH-dependent diflavin oxidoreductase 1 (595 aa).

The Flavodoxin-like domain occupies 6–150 (VLVLYGSQTG…VIDPWLLSFW (145 aa)). Residues 12 to 17 (SQTGTA), 59 to 62 (ATTG), 97 to 106 (LGDSSYPKFN), and aspartate 132 each bind FMN. In terms of domain architecture, FAD-binding FR-type spans 204 to 444 (LRPFPAPLVF…WVKKGSLKFP (241 aa)). Residues arginine 348, 380-383 (RSFS), and 414-417 (GLCS) contribute to the FAD site. Residues threonine 458, 513–514 (SR), and 519–523 (KVYVQ) each bind NADP(+). Residue tryptophan 594 participates in FAD binding.

The protein belongs to the NADPH-dependent diflavin oxidoreductase NDOR1 family. This sequence in the N-terminal section; belongs to the flavodoxin family. It in the C-terminal section; belongs to the flavoprotein pyridine nucleotide cytochrome reductase family. In terms of assembly, interacts with ciapin1; as part of the cytosolic iron-sulfur (Fe-S) protein assembly (CIA) machinery. FAD is required as a cofactor. It depends on FMN as a cofactor.

It localises to the cytoplasm. Its subcellular location is the perinuclear region. The catalysed reaction is 2 oxidized [2Fe-2S]-[protein] + NADPH = 2 reduced [2Fe-2S]-[protein] + NADP(+) + H(+). NADPH-dependent reductase which is a central component of the cytosolic iron-sulfur (Fe-S) protein assembly (CIA) machinery. Transfers electrons from NADPH via its FAD and FMN prosthetic groups to the [2Fe-2S] cluster of ciapin1, another key component of the CIA machinery. In turn, this reduced cluster provides electrons for assembly of cytosolic iron-sulfur cluster proteins. It can also reduce the [2Fe-2S] cluster of cisd1 and activate this protein implicated in Fe/S cluster repair. The chain is NADPH-dependent diflavin oxidoreductase 1 from Danio rerio (Zebrafish).